Reading from the N-terminus, the 719-residue chain is Putative RNA-binding protein involved in heterochromatin assembly (719 aa).

The 97-residue stretch at 226–322 (KILYMNNLPP…NLANTKQPRV (97 aa)) folds into the RRM domain. At Ser-345 the chain carries Phosphoserine. The RanBP2-type 1 zinc-finger motif lies at 355–384 (RPGDWNCPSCGFSNFQRRTACFRCSFPAPS). Positions 389-415 (HTANSNNNVNSSRNNLNNRVNSGSSSN) are disordered. Residues 392–415 (NSNNNVNSSRNNLNNRVNSGSSSN) show a composition bias toward low complexity. Ser-455 is subject to Phosphoserine. The segment at 511 to 561 (NNNINGNGNGNGNNSNNNNNHNNNHNNNHHNGSINSNSNTNNNNNNNNGNN) is disordered. Residues 581–610 (RAGDWKCSTCTYHNFAKNVVCLRCGGPKSI) form a RanBP2-type 2 zinc finger. A compositionally biased stretch (polar residues) spans 622-649 (DSSTFGPASRTPSNNNISVNTNGGSNAG). Residues 622 to 661 (DSSTFGPASRTPSNNNISVNTNGGSNAGRTDGNDNKGRDI) are disordered. Ser-630 bears the Phosphoserine mark. Over residues 652 to 661 (DGNDNKGRDI) the composition is skewed to basic and acidic residues.

The protein resides in the chromosome. It localises to the nucleus. Functionally, may play a role in chromatin organization. This is Putative RNA-binding protein involved in heterochromatin assembly from Saccharomyces cerevisiae (strain ATCC 204508 / S288c) (Baker's yeast).